The sequence spans 152 residues: Transcription elongation factor Spt5 (152 aa).

The KOW domain maps to 99–129 (EGDLVEVISGPFRGMQAQVVRVESTKNEVVL).

It belongs to the archaeal Spt5 family. As to quaternary structure, heterodimer composed of Spt4 and Spt5. Interacts with RNA polymerase (RNAP).

Stimulates transcription elongation. The chain is Transcription elongation factor Spt5 from Sulfolobus acidocaldarius (strain ATCC 33909 / DSM 639 / JCM 8929 / NBRC 15157 / NCIMB 11770).